A 214-amino-acid chain; its full sequence is NADH-quinone oxidoreductase subunit C (214 aa).

The protein belongs to the complex I 30 kDa subunit family. In terms of assembly, NDH-1 is composed of 14 different subunits. Subunits NuoB, C, D, E, F, and G constitute the peripheral sector of the complex.

It localises to the cell inner membrane. The catalysed reaction is a quinone + NADH + 5 H(+)(in) = a quinol + NAD(+) + 4 H(+)(out). Functionally, NDH-1 shuttles electrons from NADH, via FMN and iron-sulfur (Fe-S) centers, to quinones in the respiratory chain. The immediate electron acceptor for the enzyme in this species is believed to be ubiquinone. Couples the redox reaction to proton translocation (for every two electrons transferred, four hydrogen ions are translocated across the cytoplasmic membrane), and thus conserves the redox energy in a proton gradient. This Francisella tularensis subsp. tularensis (strain WY96-3418) protein is NADH-quinone oxidoreductase subunit C.